The sequence spans 274 residues: Protein STAY-GREEN, chloroplastic (274 aa).

A chloroplast-targeting transit peptide spans 1–48 (MAAATSTMSLIPPITQQQRWHAADSLVVLASRRHDSRRRRRCRYVVPR).

The protein belongs to the staygreen family.

It is found in the plastid. The protein localises to the chloroplast. Involved in the disassembling mechanism of the intact light-harvesting complex of photosystem II (LHCPII) in the thylakoid membranes. Required to trigger chlorophyll degradation during natural and dark-induced leaf senescence. The protein is Protein STAY-GREEN, chloroplastic (SGR) of Oryza sativa subsp. indica (Rice).